The sequence spans 430 residues: Protein translocase subunit SecY (430 aa).

10 helical membrane passes run 18–38, 68–88, 117–137, 148–168, 179–199, 215–235, 270–290, 308–328, 368–388, and 390–410; these read IFFT…PAPG, FSIF…MQLL, FAII…NNYL, MSYL…LWLG, GISI…LIQF, LQVA…VYVL, VIPV…TMFF, NIGM…YAFV, FVGS…TKFM, and LPQS…VAIE.

It belongs to the SecY/SEC61-alpha family. As to quaternary structure, component of the Sec protein translocase complex. Heterotrimer consisting of SecY, SecE and SecG subunits. The heterotrimers can form oligomers, although 1 heterotrimer is thought to be able to translocate proteins. Interacts with the ribosome. Interacts with SecDF, and other proteins may be involved. Interacts with SecA.

The protein localises to the cell membrane. Functionally, the central subunit of the protein translocation channel SecYEG. Consists of two halves formed by TMs 1-5 and 6-10. These two domains form a lateral gate at the front which open onto the bilayer between TMs 2 and 7, and are clamped together by SecE at the back. The channel is closed by both a pore ring composed of hydrophobic SecY resides and a short helix (helix 2A) on the extracellular side of the membrane which forms a plug. The plug probably moves laterally to allow the channel to open. The ring and the pore may move independently. This is Protein translocase subunit SecY from Staphylococcus carnosus (strain TM300).